A 356-amino-acid polypeptide reads, in one-letter code: Protein-arginine kinase (356 aa).

The 231-residue stretch at I24 to A254 folds into the Phosphagen kinase C-terminal domain. Residues S27–R31, H92, R125, R176–M180, and R207–E212 each bind ATP. The RDXXRA motif of the pArg binding pocket involved in allosteric regulation signature appears at R337 to A342.

This sequence belongs to the ATP:guanido phosphotransferase family.

The enzyme catalyses L-arginyl-[protein] + ATP = N(omega)-phospho-L-arginyl-[protein] + ADP + H(+). Its activity is regulated as follows. Appears to be allosterically activated by the binding of pArg-containing polypeptides to the pArg-binding pocket localized in the C-terminal domain of McsB. In terms of biological role, catalyzes the specific phosphorylation of arginine residues in a large number of proteins. Is part of the bacterial stress response system. Protein arginine phosphorylation has a physiologically important role and is involved in the regulation of many critical cellular processes, such as protein homeostasis, motility, competence, and stringent and stress responses, by regulating gene expression and protein activity. The chain is Protein-arginine kinase from Bacillus cytotoxicus (strain DSM 22905 / CIP 110041 / 391-98 / NVH 391-98).